The chain runs to 149 residues: Arginine repressor (149 aa).

This sequence belongs to the ArgR family.

It localises to the cytoplasm. The protein operates within amino-acid biosynthesis; L-arginine biosynthesis [regulation]. Regulates arginine biosynthesis genes. The chain is Arginine repressor from Chlorobaculum tepidum (strain ATCC 49652 / DSM 12025 / NBRC 103806 / TLS) (Chlorobium tepidum).